Reading from the N-terminus, the 466-residue chain is Ribulose bisphosphate carboxylase large chain (466 aa).

At Lys-5 the chain carries N6,N6,N6-trimethyllysine. Positions 114 and 164 each coordinate substrate. Catalysis depends on Lys-166, which acts as the Proton acceptor. Position 168 (Lys-168) interacts with substrate. Mg(2+) contacts are provided by Lys-192, Asp-194, and Glu-195. Residue Lys-192 is modified to N6-carboxylysine. Residue His-285 is the Proton acceptor of the active site. Arg-286, His-318, and Ser-370 together coordinate substrate.

It belongs to the RuBisCO large chain family. Type I subfamily. Heterohexadecamer of 8 large chains and 8 small chains; disulfide-linked. The disulfide link is formed within the large subunit homodimers. The cofactor is Mg(2+). In terms of processing, the disulfide bond which can form in the large chain dimeric partners within the hexadecamer appears to be associated with oxidative stress and protein turnover.

The protein resides in the plastid. It is found in the chloroplast. The catalysed reaction is 2 (2R)-3-phosphoglycerate + 2 H(+) = D-ribulose 1,5-bisphosphate + CO2 + H2O. It catalyses the reaction D-ribulose 1,5-bisphosphate + O2 = 2-phosphoglycolate + (2R)-3-phosphoglycerate + 2 H(+). Functionally, ruBisCO catalyzes two reactions: the carboxylation of D-ribulose 1,5-bisphosphate, the primary event in carbon dioxide fixation, as well as the oxidative fragmentation of the pentose substrate in the photorespiration process. Both reactions occur simultaneously and in competition at the same active site. The chain is Ribulose bisphosphate carboxylase large chain from Coriaria myrtifolia (Tanner's sumac).